Reading from the N-terminus, the 266-residue chain is Tryptophan synthase alpha chain (266 aa).

Catalysis depends on proton acceptor residues glutamate 51 and aspartate 62.

The protein belongs to the TrpA family. Tetramer of two alpha and two beta chains.

The enzyme catalyses (1S,2R)-1-C-(indol-3-yl)glycerol 3-phosphate + L-serine = D-glyceraldehyde 3-phosphate + L-tryptophan + H2O. It functions in the pathway amino-acid biosynthesis; L-tryptophan biosynthesis; L-tryptophan from chorismate: step 5/5. Its function is as follows. The alpha subunit is responsible for the aldol cleavage of indoleglycerol phosphate to indole and glyceraldehyde 3-phosphate. In Prochlorococcus marinus (strain NATL1A), this protein is Tryptophan synthase alpha chain.